Here is a 618-residue protein sequence, read N- to C-terminus: Sodium/iodide cotransporter (618 aa).

Residues 1 to 14 are Extracellular-facing; the sequence is MEGAEAGARATFGP. Residues 15-31 traverse the membrane as a helical segment; it reads WDYGVFATMLLVSTGIG. The Cytoplasmic segment spans residues 32–56; that stretch reads LWVGLARGGQRSADDFFTGGRQLAA. A discontinuously helical membrane pass occupies residues 57–80; the sequence is VPVGLSLAASFMSAVQVLGVPAEA. 3 residues coordinate Na(+): Ser69, Val71, and Gln72. Val76 contributes to the iodide binding site. The Extracellular portion of the chain corresponds to 81-84; the sequence is ARYG. A helical membrane pass occupies residues 85–105; sequence LKFLWMCVGQLLNSLLTALLF. Met90 provides a ligand contact to iodide. Topologically, residues 106-130 are cytoplasmic; the sequence is LPIFYRLGLTSTYQYLELRFSRAVR. The helical transmembrane segment at 131–157 threads the bilayer; that stretch reads LCGTLQYLVATMLYTGIVIYAPALILN. Tyr144 serves as a coordination point for Na(+). Over 158-163 the chain is Extracellular; sequence QVTGLD. Residues 164–181 form a helical membrane-spanning segment; it reads IWASLLSTGIICTLYTTV. The Cytoplasmic portion of the chain corresponds to 182-189; sequence GGMKAVVW. The helical transmembrane segment at 190-208 threads the bilayer; it reads TDVFQVVVMLVGFWVILAR. Topologically, residues 209–243 are extracellular; sequence GVMLMGGPWNVLSLAQNHSRINLMDFDPDPRSRYT. Residues 244–266 traverse the membrane as a discontinuously helical segment; it reads FWTFVVGGSLVWLSMYGVNQAQV. Iodide is bound at residue Trp255. Na(+) is bound at residue Met258. Topologically, residues 267-278 are cytoplasmic; that stretch reads QRYVACHTERKA. Residues 279-301 form a helical membrane-spanning segment; it reads KLALLVNQLGLFLIVASAACCGI. The Extracellular segment spans residues 302–335; the sequence is VMFVYYKDCDPLLTGRIAAPDQYMPLLVLDIFED. Residues 336 to 363 form a helical membrane-spanning segment; the sequence is LPGVPGLFLACAYSGTLSTASTSINAMA. At 364-386 the chain is on the cytoplasmic side; it reads AVTVEDLIKPRMPSLAPRKLVFI. Residues 387 to 408 form a helical membrane-spanning segment; that stretch reads SKGLSFIYGSTCLTVAALSSLL. Residues 409-411 are Extracellular-facing; the sequence is GGG. Residues 412–437 traverse the membrane as a helical segment; it reads VLQGSFTVMGVISGPLLGAFTLGMLL. Leu413 lines the iodide pocket. Ser416 and Phe417 together coordinate Na(+). Phe417 serves as a coordination point for iodide. Residues 438 to 441 are Cytoplasmic-facing; that stretch reads PACN. A helical transmembrane segment spans residues 442–465; that stretch reads TPGVLSGLTAGLAVSLWVAVGATL. At 466-520 the chain is on the extracellular side; it reads YPPGEQTMGVLPTSAAGCTNASVLPSPPGAANTSRGIPSSGMDSGRPAFADTFYA. Residues Asn485 and Asn497 are each glycosylated (N-linked (GlcNAc...) asparagine). Residues 521 to 545 form a helical membrane-spanning segment; sequence VSYLYYGALGTLTTMLCGALISYLT. The Cytoplasmic segment spans residues 546-618; sequence GPTKRSSLGP…YLGHDVETNL (73 aa). Ser551 is modified (phosphoserine; by PKA). Positions 571–587 are enriched in basic and acidic residues; that stretch reads PKEDTTTLEDSLVKGPE. The disordered stretch occupies residues 571–618; that stretch reads PKEDTTTLEDSLVKGPEDIPAATKKPPGFRPEAETHPLYLGHDVETNL.

It belongs to the sodium:solute symporter (SSF) (TC 2.A.21) family. Monomer. Post-translationally, glycosylated.

The protein localises to the cell membrane. Its subcellular location is the cytoplasm. It catalyses the reaction iodide(out) + 2 Na(+)(out) = iodide(in) + 2 Na(+)(in). The enzyme catalyses chlorate(out) + 2 Na(+)(out) = chlorate(in) + 2 Na(+)(in). The catalysed reaction is thiocyanate(out) + 2 Na(+)(out) = thiocyanate(in) + 2 Na(+)(in). It carries out the reaction nitrate(out) + 2 Na(+)(out) = nitrate(in) + 2 Na(+)(in). It catalyses the reaction selenocyanate(out) + 2 Na(+)(out) = selenocyanate(in) + 2 Na(+)(in). Its activity is regulated as follows. Perchlorate inhibits iodide transport activity. Oxyanions inhibit iodide transport activity by blocking the binding sites for iodide and one of the sodium ions. In terms of biological role, sodium:iodide symporter that mediates the transport of iodide into the thyroid gland. Can also mediate the transport of chlorate, thiocynate, nitrate and selenocynate. The chain is Sodium/iodide cotransporter (Slc5a5) from Mus musculus (Mouse).